The primary structure comprises 313 residues: HPr kinase/phosphorylase (313 aa).

Active-site residues include histidine 140 and lysine 161. 155 to 162 (GDSGVGKS) is a binding site for ATP. Position 162 (serine 162) interacts with Mg(2+). Aspartate 179 serves as the catalytic Proton acceptor; for phosphorylation activity. Proton donor; for dephosphorylation activity. Residues 203–212 (LEIRGIGIID) are important for the catalytic mechanism of both phosphorylation and dephosphorylation. Glutamate 204 contributes to the Mg(2+) binding site. Arginine 245 is a catalytic residue. An important for the catalytic mechanism of dephosphorylation region spans residues 266-271 (PVKVGR).

It belongs to the HPrK/P family. As to quaternary structure, homohexamer. It depends on Mg(2+) as a cofactor.

The enzyme catalyses [HPr protein]-L-serine + ATP = [HPr protein]-O-phospho-L-serine + ADP + H(+). The catalysed reaction is [HPr protein]-O-phospho-L-serine + phosphate + H(+) = [HPr protein]-L-serine + diphosphate. Functionally, catalyzes the ATP- as well as the pyrophosphate-dependent phosphorylation of a specific serine residue in HPr, a phosphocarrier protein of the phosphoenolpyruvate-dependent sugar phosphotransferase system (PTS). HprK/P also catalyzes the pyrophosphate-producing, inorganic phosphate-dependent dephosphorylation (phosphorolysis) of seryl-phosphorylated HPr (P-Ser-HPr). The two antagonistic activities of HprK/P are regulated by several intracellular metabolites, which change their concentration in response to the absence or presence of rapidly metabolisable carbon sources (glucose, fructose, etc.) in the growth medium. Therefore, by controlling the phosphorylation state of HPr, HPrK/P is a sensor enzyme that plays a major role in the regulation of carbon metabolism and sugar transport: it mediates carbon catabolite repression (CCR), and regulates PTS-catalyzed carbohydrate uptake and inducer exclusion. In Latilactobacillus sakei subsp. sakei (strain 23K) (Lactobacillus sakei subsp. sakei), this protein is HPr kinase/phosphorylase.